The sequence spans 104 residues: Large ribosomal subunit protein uL23 (104 aa).

This sequence belongs to the universal ribosomal protein uL23 family. Part of the 50S ribosomal subunit. Contacts protein L29, and trigger factor when it is bound to the ribosome.

Functionally, one of the early assembly proteins it binds 23S rRNA. One of the proteins that surrounds the polypeptide exit tunnel on the outside of the ribosome. Forms the main docking site for trigger factor binding to the ribosome. In Nostoc punctiforme (strain ATCC 29133 / PCC 73102), this protein is Large ribosomal subunit protein uL23.